The following is a 358-amino-acid chain: MRVLAAMSGGVDSSVAAARMVDAGHDVVGVHLALSTAPGTLRTGSRGCCSKEDASDARRVADVLGIPFYVWDFAEKFQADVIDEFVSAYARGETPNPCVTCNQKIKFSALSAKAVALGFDAVATGHYARLSGGRLRRAVDKDKDQSYVLAVLSAEQLRHAAFPIGDTPKPQIREEAARRGLAVAEKPDSHDICFIPSGNTRAFLGERIGVRRGAVVNADGTVLAEHDGVHGFTIGQRKGLGIAGPGPDGRPRYVTAIDADTATVRVGEAADLDVREMLGRAVVFTSGTAPSGPFECAVQVRAHGETADAVAELVGDELVVRLRAPLRGVAPGQTLALYRHDPDGDEVLGSATIAGTSR.

ATP is bound by residues 6 to 13 (AMSGGVDS) and leucine 32. The active-site Nucleophile is cysteine 101. Cysteine 101 and cysteine 193 are disulfide-bonded. ATP is bound at residue glycine 125. The interaction with tRNA stretch occupies residues 143–145 (KDQ). Catalysis depends on cysteine 193, which acts as the Cysteine persulfide intermediate.

This sequence belongs to the MnmA/TRMU family.

Its subcellular location is the cytoplasm. The catalysed reaction is S-sulfanyl-L-cysteinyl-[protein] + uridine(34) in tRNA + AH2 + ATP = 2-thiouridine(34) in tRNA + L-cysteinyl-[protein] + A + AMP + diphosphate + H(+). Its function is as follows. Catalyzes the 2-thiolation of uridine at the wobble position (U34) of tRNA, leading to the formation of s(2)U34. This is tRNA-specific 2-thiouridylase MnmA from Mycobacterium avium (strain 104).